The sequence spans 800 residues: MPRAPALLFSCLLGLCALVPRLPGLNICTSGSATSCEECLLIHPKCAWCFKEDFGSLRSVTSRCDLKANLIRNGCGVEFESPASSTQVLRSLPLSSKGSSPAGSDVIQLTPQEVTVTLRPGDRTAFQLQVRQVEDYPVDLYYLMDLSLSMKDDLENIRSLGTKLAEEMRKLTSNFRLGFGSFVDKNISPFSYTAPRYQTNPCIGYKLFPNCVPSFGFRHLLPLTDRVDSFNEEVRKQRVSRNRDAPEGGFDAVLQAAVCKEKIGWRKDALHLLVFTTDDVPHIALDGKLGGLVQPHDGQCHLNEANEYTASNQMDYPSLALLGEKLAENNINLIFAVTKNHYMLYKNFTALIPGTTVEILHGDSKNILQLIINAYNSIRSKVELSVWDQPEDLNLFFTATCQDGVSYPGQRKCEGLKIGDTASFEVSVEARSCPSKHVQHTFTLRPVGFRDSLEVGVTYNCRCGCSAGLEPDSARCSSNGTYVCGLCECNPGYLGTRCECQEGESQSGYQNLCREAEGKPLCSGRGQCSCNQCSCFESEFGKIYGSFCECDNFSCARNKGVLCSGHGECHCGECKCHAGYIGDNCNCSTDISTCQARDGHICSDRGHCVCGQCQCTEPGAFGETCEKCPTCPDACSTKRDCVECLLLHSGSSADNQTCQNLCKDEVITRVDTIVKDDQEAVLCFYKTAKDCVMMFTYSELPSGKSNLTVLREPECGTAPSAMTILLAVVGSILLTGFALLVIWKLLVTIHDRREFAKFQSERSRARYEMASNPLYRKPISTHTVDFTFNKFNKSYNGTVD.

An N-terminal signal peptide occupies residues 1-24 (MPRAPALLFSCLLGLCALVPRLPG). The Extracellular portion of the chain corresponds to 25-722 (LNICTSGSAT…PECGTAPSAM (698 aa)). The region spanning 27-76 (ICTSGSATSCEECLLIHPKCAWCFKEDFGSLRSVTSRCDLKANLIRNGCG) is the PSI domain. Disulfide bonds link Cys28/Cys46, Cys36/Cys463, Cys39/Cys64, Cys49/Cys75, Cys202/Cys211, Cys259/Cys300, Cys401/Cys413, Cys433/Cys461, Cys465/Cys484, Cys476/Cys487, Cys489/Cys498, Cys500/Cys530, Cys513/Cys528, Cys522/Cys533, Cys535/Cys548, Cys550/Cys571, Cys555/Cys569, Cys563/Cys574, and Cys576/Cys585. In terms of domain architecture, VWFA spans 136–378 (YPVDLYYLMD…QLIINAYNSI (243 aa)). Residues Ser147 and Ser149 each coordinate Mg(2+). Residues Ser149, Asp152, Asp153, and Asp184 each coordinate Ca(2+). Residues Asn242, Asp244, Pro246, and Glu247 each contribute to the Ca(2+) site. Residue Glu247 participates in Mg(2+) binding. A glycan (N-linked (GlcNAc...) asparagine) is linked at Asn347. Gly362 serves as a coordination point for Ca(2+). 4 I-EGF domains span residues 465–499 (CSAG…TRCE), 500–549 (CQEG…SFCE), 550–586 (CDNF…DNCN), and 587–626 (CSTD…ETCE). Asn479 carries an N-linked (GlcNAc...) asparagine glycan. Residue Asn552 is glycosylated (N-linked (GlcNAc...) asparagine). Asn586 carries N-linked (GlcNAc...) asparagine glycosylation. 9 disulfides stabilise this stretch: Cys587–Cys610, Cys594–Cys608, Cys602–Cys613, Cys615–Cys625, Cys628–Cys631, Cys635–Cys683, Cys641–Cys662, Cys644–Cys658, and Cys691–Cys715. Asn655 and Asn706 each carry an N-linked (GlcNAc...) asparagine glycan. A helical membrane pass occupies residues 723–743 (TILLAVVGSILLTGFALLVIW). At 744-800 (KLLVTIHDRREFAKFQSERSRARYEMASNPLYRKPISTHTVDFTFNKFNKSYNGTVD) the chain is on the cytoplasmic side. Ser771 is subject to Phosphoserine.

Belongs to the integrin beta chain family. As to quaternary structure, heterodimer of an alpha and a beta subunit. Beta-5 (ITGB5) associates with alpha-V (ITGAV). Interacts with MYO10. Interacts with DAB2. Integrin ITGAV:ITGB5 interacts with FBLN5 (via N-terminus). ITGAV:ITGB5 interacts with CCN3. Interacts with tensin TNS3; TNS3 also interacts with PEAK1, thus acting as an adapter molecule to bridge the association of PEAK1 with ITGB5.

It is found in the cell membrane. Integrin alpha-V/beta-5 (ITGAV:ITGB5) is a receptor for fibronectin. It recognizes the sequence R-G-D in its ligand. The chain is Integrin beta-5 (ITGB5) from Bos taurus (Bovine).